Reading from the N-terminus, the 355-residue chain is MSEEQFGGDGAAAAATAAVGGSAGEQEGAMVAATQGAAAAAGSGAGTGGGTASGGTEGGSAESEGAKIDASKNEEDEGHSNSSPRHSEAATAQREEWKMFIGGLSWDTTKKDLKDYFSKFGEVVDCTLKLDPITGRSRGFGFVLFKESESVDKVMDQKEHKLNGKVIDPKRAKAMKTKEPVKKIFVGGLSPDTPEEKIREYFGGFGEVESIELPMDNKTNKRRGFCFITFKEEEPVKKIMEKKYHNVGLSKCEIKVAMSKEQYQQQQQWGSRGGFAGRARGRGGGPSQNWNQGYSNYWNQGYGNYGYNSQGYGGYGGYDYTGYNNYYGYGDYSNQQSGYGKVSRRGGHQNSYKPY.

Residues 1-92 (MSEEQFGGDG…SPRHSEAATA (92 aa)) are disordered. Ser2 is modified (N-acetylserine). Composition is skewed to low complexity over residues 11 to 20 (AAAAATAAVG) and 27 to 42 (EGAM…AAAG). Residues 43 to 58 (SGAGTGGGTASGGTEG) show a composition bias toward gly residues. Over residues 64-73 (EGAKIDASKN) the composition is skewed to basic and acidic residues. Ser71 is subject to Phosphoserine. A Glycyl lysine isopeptide (Lys-Gly) (interchain with G-Cter in SUMO2) cross-link involves residue Lys72. Phosphoserine occurs at positions 80, 82, and 83. Thr91 is subject to Phosphothreonine. RRM domains lie at 97 to 179 (WKMF…KTKE) and 182 to 261 (KKIF…MSKE). Lys119 carries the N6-methyllysine modification. Residue Thr127 is modified to Phosphothreonine. Lys129 participates in a covalent cross-link: Glycyl lysine isopeptide (Lys-Gly) (interchain with G-Cter in SUMO2). Lys165 carries the post-translational modification N6-acetyllysine. Residue Ser190 is modified to Phosphoserine. A Phosphothreonine modification is found at Thr193. Lys197 is covalently cross-linked (Glycyl lysine isopeptide (Lys-Gly) (interchain with G-Cter in SUMO2)). An N6-acetyllysine mark is found at Lys243 and Lys251. At Tyr263 the chain carries Omega-N-methylarginine. Ser271 carries the phosphoserine modification. Omega-N-methylarginine is present on Arg272. At Gly273 the chain carries N6-acetyllysine. Arg278, Arg280, and Arg282 each carry omega-N-methylarginine. At Gln292 the chain carries N6-acetyllysine. Arg345 bears the Asymmetric dimethylarginine; alternate mark. Arg345 is subject to Dimethylated arginine; alternate. Residue Arg345 is modified to Omega-N-methylarginine; alternate.

Identified in a IGF2BP1-dependent mRNP granule complex containing untranslated mRNAs. Part of a complex associated with the FOS mCRD domain and consisting of PABPC1, PAIP1, CSDE1/UNR and SYNCRIP. Interacts with IGF2BP2. Interacts with GTPBP1. Interacts with EIF4G1; the interaction requires RNA. Interacts with EIF3B and RPS3. In terms of processing, arg-345 is dimethylated, probably to asymmetric dimethylarginine. Methylated by PRMT1, in an insulin-dependent manner. The PRMT1-mediated methylation regulates tyrosine phosphorylation.

The protein localises to the nucleus. It localises to the cytoplasm. Binds with high affinity to RNA molecules that contain AU-rich elements (AREs) found within the 3'-UTR of many proto-oncogenes and cytokine mRNAs. Also binds to double- and single-stranded DNA sequences in a specific manner and functions a transcription factor. Each of the RNA-binding domains specifically can bind solely to a single-stranded non-monotonous 5'-UUAG-3' sequence and also weaker to the single-stranded 5'-TTAGGG-3' telomeric DNA repeat. Binds RNA oligonucleotides with 5'-UUAGGG-3' repeats more tightly than the telomeric single-stranded DNA 5'-TTAGGG-3' repeats. Binding of RRM1 to DNA inhibits the formation of DNA quadruplex structure which may play a role in telomere elongation. May be involved in translationally coupled mRNA turnover. Implicated with other RNA-binding proteins in the cytoplasmic deadenylation/translational and decay interplay of the FOS mRNA mediated by the major coding-region determinant of instability (mCRD) domain. May play a role in the regulation of the rhythmic expression of circadian clock core genes. Directly binds to the 3'UTR of CRY1 mRNA and induces CRY1 rhythmic translation. May also be involved in the regulation of PER2 translation. This is Heterogeneous nuclear ribonucleoprotein D0 (HNRNPD) from Homo sapiens (Human).